We begin with the raw amino-acid sequence, 540 residues long: Chaperonin GroEL (540 aa).

Residues 30–33, 87–91, G414, 479–481, and D495 contribute to the ATP site; these read TLGP, DGTTT, and NAL.

Belongs to the chaperonin (HSP60) family. As to quaternary structure, forms a cylinder of 14 subunits composed of two heptameric rings stacked back-to-back. Interacts with the co-chaperonin GroES.

The protein resides in the cytoplasm. The enzyme catalyses ATP + H2O + a folded polypeptide = ADP + phosphate + an unfolded polypeptide.. Functionally, together with its co-chaperonin GroES, plays an essential role in assisting protein folding. The GroEL-GroES system forms a nano-cage that allows encapsulation of the non-native substrate proteins and provides a physical environment optimized to promote and accelerate protein folding. This is Chaperonin GroEL from Carboxydothermus hydrogenoformans (strain ATCC BAA-161 / DSM 6008 / Z-2901).